Consider the following 282-residue polypeptide: uncharacterized protein (282 aa).

Residues 205–277 adopt a coiled-coil conformation; it reads LAQQRRVYAQ…DELQNKARDA (73 aa).

This is an uncharacterized protein from Treponema pallidum (strain Nichols).